The sequence spans 191 residues: Penicillin-binding protein activator LpoB (191 aa).

Positions 1–16 are cleaved as a signal peptide; it reads MKRYLSLALAALVLTG. C17 is lipidated: N-palmitoyl cysteine. C17 carries S-diacylglycerol cysteine lipidation.

The protein belongs to the LpoB family. Interacts with PBP1b.

Its subcellular location is the cell outer membrane. Functionally, regulator of peptidoglycan synthesis that is essential for the function of penicillin-binding protein 1B (PBP1b). The polypeptide is Penicillin-binding protein activator LpoB (Yersinia pestis (strain D182038)).